The primary structure comprises 278 residues: TATA box-binding protein-associated factor RNA polymerase I subunit D (278 aa).

Disordered stretches follow at residues 19–71 (LANR…SSFE) and 88–115 (KKRYKKKKKKRYQPTGRPRGRPEGRRNP). Ser-23 carries the phosphoserine modification. Basic residues-rich tracts occupy residues 43-53 (REKRNPIRKFV) and 88-99 (KKRYKKKKKKRY). Phosphoserine occurs at positions 138 and 234.

In terms of assembly, component of the transcription factor SL1/TIF-IB complex, composed of TBP and at least TAF1A, TAF1B, TAF1C and TAF1D. Interacts with UBTF.

It localises to the nucleus. Functionally, component of the transcription factor SL1/TIF-IB complex, which is involved in the assembly of the PIC (preinitiation complex) during RNA polymerase I-dependent transcription. The rate of PIC formation probably is primarily dependent on the rate of association of SL1/TIF-IB with the rDNA promoter. SL1/TIF-IB is involved in stabilization of nucleolar transcription factor 1/UBTF on rDNA. Formation of SL1/TIF-IB excludes the association of TBP with TFIID subunits. This Pongo abelii (Sumatran orangutan) protein is TATA box-binding protein-associated factor RNA polymerase I subunit D (TAF1D).